The sequence spans 362 residues: Methionine import ATP-binding protein MetN (362 aa).

The 240-residue stretch at 2 to 241 (IHIENLSKTY…PRHEVTRAMV (240 aa)) folds into the ABC transporter domain. An ATP-binding site is contributed by 38–45 (GPSGAGKS).

The protein belongs to the ABC transporter superfamily. Methionine importer (TC 3.A.1.24) family. As to quaternary structure, the complex is composed of two ATP-binding proteins (MetN), two transmembrane proteins (MetI) and a solute-binding protein (MetQ).

It localises to the cell inner membrane. It carries out the reaction L-methionine(out) + ATP + H2O = L-methionine(in) + ADP + phosphate + H(+). The catalysed reaction is D-methionine(out) + ATP + H2O = D-methionine(in) + ADP + phosphate + H(+). In terms of biological role, part of the ABC transporter complex MetNIQ involved in methionine import. Responsible for energy coupling to the transport system. In Bordetella bronchiseptica (strain ATCC BAA-588 / NCTC 13252 / RB50) (Alcaligenes bronchisepticus), this protein is Methionine import ATP-binding protein MetN.